The primary structure comprises 1861 residues: Polyketide synthase 2 (1861 aa).

One can recognise a Ketosynthase family 3 (KS3) domain in the interval 109 to 525 (DSKIAIIGMS…GGNSALLLED (417 aa)). Catalysis depends on for beta-ketoacyl synthase activity residues Cys-264, His-399, and His-441. Residues 626 to 931 (GFVFSGQGAQ…PSLHRKDDGW (306 aa)) are malonyl-CoA:ACP transacylase (MAT) domain. Ser-716 functions as the For acyl/malonyl transferase activity in the catalytic mechanism. The tract at residues 1008-1312 (TSSVQKVIQQ…VFGGMTVLPP (305 aa)) is product template (PT) domain. The segment at 1012–1146 (QKVIQQTDGP…CILRFADPKS (135 aa)) is N-terminal hotdog fold. A PKS/mFAS DH domain is found at 1012–1318 (QKVIQQTDGP…VLPPRRGADA (307 aa)). The Proton acceptor; for dehydratase activity role is filled by His-1045. The C-terminal hotdog fold stretch occupies residues 1174–1318 (DSLLSKGIVY…VLPPRRGADA (145 aa)). Catalysis depends on Asp-1232, which acts as the Proton donor; for dehydratase activity. One can recognise a Carrier 1 domain in the interval 1356-1433 (SPQSGAIHRI…ELRLFLAADQ (78 aa)). Residue Ser-1393 is modified to O-(pantetheine 4'-phosphoryl)serine. The interval 1441 to 1470 (CESSNGQHTPQTSDKGSGTLTAQKPDHDTD) is disordered. Over residues 1442-1462 (ESSNGQHTPQTSDKGSGTLTA) the composition is skewed to polar residues. Positions 1472 to 1546 (EMTLNRVCAI…SLQKTLRGTE (75 aa)) constitute a Carrier 2 domain. Ser-1506 is subject to O-(pantetheine 4'-phosphoryl)serine. A thioesterase (TE) domain region spans residues 1582 to 1855 (ASAPHATSIL…IIEMSNLIGD (274 aa)). Catalysis depends on Ser-1685, which acts as the For thioesterase activity.

Functionally, polyketide synthase; part of the Pks2 gene cluster that mediates the formation of infectious structures (appressoria), enabling these fungi to kill insects faster. The product of the Pks2 gene cluster is different from the one of Pks1 and has still not been identified. This chain is Polyketide synthase 2, found in Metarhizium acridum (strain CQMa 102).